A 147-amino-acid chain; its full sequence is Diuretic hormone 45 (147 aa).

Residues 1-26 form the signal peptide; the sequence is MMWWAVWCAAMVAGSVFTAAAPPTDS. Positions 27 to 84 are excised as a propeptide; that stretch reads IDLMQMDPSLADDESLGFAMQSLSGRYAAAPWLYLLADVSHDPQRMAEFSQSSGRARP. V131 is modified (valine amide). The propeptide occupies 135 to 147; that stretch reads GAWGEPASYLYNN.

This sequence belongs to the sauvagine/corticotropin-releasing factor/urotensin I family.

The protein resides in the secreted. In terms of biological role, regulation of fluid secretion. This Bombyx mori (Silk moth) protein is Diuretic hormone 45 (dh45).